The chain runs to 59 residues: Large ribosomal subunit protein uL30 (59 aa).

Belongs to the universal ribosomal protein uL30 family. Part of the 50S ribosomal subunit.

This chain is Large ribosomal subunit protein uL30, found in Buchnera aphidicola subsp. Acyrthosiphon pisum (strain 5A).